A 462-amino-acid chain; its full sequence is tRNA wybutosine-synthesizing protein 2 (462 aa).

Residues serine 257, lysine 264, and 305–306 (EL) contribute to the S-adenosyl-L-methionine site.

This sequence belongs to the class I-like SAM-binding methyltransferase superfamily. TRM5/TYW2 family.

The protein localises to the cytoplasm. It carries out the reaction 4-demethylwyosine(37) in tRNA(Phe) + S-adenosyl-L-methionine = 4-demethyl-7-[(3S)-3-amino-3-carboxypropyl]wyosine(37) in tRNA(Phe) + S-methyl-5'-thioadenosine + H(+). It functions in the pathway tRNA modification; wybutosine-tRNA(Phe) biosynthesis. In terms of biological role, S-adenosyl-L-methionine-dependent transferase that acts as a component of the wybutosine biosynthesis pathway. Wybutosine is a hyper modified guanosine with a tricyclic base found at the 3'-position adjacent to the anticodon of eukaryotic phenylalanine tRNA. Catalyzes the transfer of the alpha-amino-alpha-carboxypropyl (acp) group from S-adenosyl-L-methionine to the C-7 position of 4-demethylwyosine (imG-14) to produce wybutosine-86. The polypeptide is tRNA wybutosine-synthesizing protein 2 (TRM12) (Saccharomyces cerevisiae (strain ATCC 204508 / S288c) (Baker's yeast)).